The following is a 134-amino-acid chain: ATP synthase epsilon chain (134 aa).

Belongs to the ATPase epsilon chain family. F-type ATPases have 2 components, CF(1) - the catalytic core - and CF(0) - the membrane proton channel. CF(1) has five subunits: alpha(3), beta(3), gamma(1), delta(1), epsilon(1). CF(0) has three main subunits: a, b and c.

It is found in the cell inner membrane. In terms of biological role, produces ATP from ADP in the presence of a proton gradient across the membrane. The protein is ATP synthase epsilon chain of Sinorhizobium fredii (strain NBRC 101917 / NGR234).